A 313-amino-acid chain; its full sequence is Ribosomal RNA small subunit methyltransferase H (313 aa).

Residues 33 to 35 (AGH), Glu-52, Phe-80, Asp-101, and Gln-108 contribute to the S-adenosyl-L-methionine site.

It belongs to the methyltransferase superfamily. RsmH family.

The protein localises to the cytoplasm. It carries out the reaction cytidine(1402) in 16S rRNA + S-adenosyl-L-methionine = N(4)-methylcytidine(1402) in 16S rRNA + S-adenosyl-L-homocysteine + H(+). In terms of biological role, specifically methylates the N4 position of cytidine in position 1402 (C1402) of 16S rRNA. The protein is Ribosomal RNA small subunit methyltransferase H of Spiroplasma kunkelii.